The primary structure comprises 479 residues: Cardiolipin synthase A (479 aa).

Transmembrane regions (helical) follow at residues 8–28 (FFGYLLGMIHLLGIVAALHAL) and 38–58 (IAWAMPLLFIPYLTLIPYLIF). PLD phosphodiesterase domains lie at 218 to 245 (VNFRNHRKIVVVDGLLGFIGGHNVGDEY) and 392 to 419 (QPGFLHQKVVLVDDDVSAIGSANLDNRS). Residues histidine 223, lysine 225, aspartate 230, histidine 397, lysine 399, and aspartate 404 contribute to the active site.

This sequence belongs to the phospholipase D family. Cardiolipin synthase subfamily. ClsA sub-subfamily.

The protein localises to the cell inner membrane. The enzyme catalyses 2 a 1,2-diacyl-sn-glycero-3-phospho-(1'-sn-glycerol) = a cardiolipin + glycerol. Functionally, catalyzes the reversible phosphatidyl group transfer from one phosphatidylglycerol molecule to another to form cardiolipin (CL) (diphosphatidylglycerol) and glycerol. The chain is Cardiolipin synthase A from Pseudomonas putida (strain ATCC 700007 / DSM 6899 / JCM 31910 / BCRC 17059 / LMG 24140 / F1).